We begin with the raw amino-acid sequence, 272 residues long: Anamorsin homolog (272 aa).

The N-terminal SAM-like domain stretch occupies residues M1 to K156. Positions P157–M185 are linker. The [2Fe-2S] cluster site is built by C195, C202, C205, and C207. Residues C195 to C207 are fe-S binding site A. 4 residues coordinate [4Fe-4S] cluster: C233, C236, C244, and C247. 2 consecutive short sequence motifs (cx2C motif) follow at residues C233–C236 and C244–C247. Residues C233 to C247 are fe-S binding site B.

This sequence belongs to the anamorsin family. As to quaternary structure, monomer. Interacts with ATR3. Requires [2Fe-2S] cluster as cofactor. It depends on [4Fe-4S] cluster as a cofactor.

Its subcellular location is the cytoplasm. It localises to the mitochondrion intermembrane space. In terms of biological role, component of the cytosolic iron-sulfur (Fe-S) protein assembly (CIA) machinery. Required for the maturation of extramitochondrial Fe-S proteins. Part of an electron transfer chain functioning in an early step of cytosolic Fe-S biogenesis, facilitating the de novo assembly of a [4Fe-4S] cluster on the cytosolic Fe-S scaffold complex. Electrons are transferred from NADPH via FAD- and FMN-containing diflavin oxidoreductase TAH18/ATR3. Together with the diflavin oxidoreductase, also required for the assembly of the diferric tyrosyl radical cofactor of ribonucleotide reductase (RNR), probably by providing electrons for reduction during radical cofactor maturation in the catalytic small subunit. Required for embryo development. The chain is Anamorsin homolog from Arabidopsis thaliana (Mouse-ear cress).